A 467-amino-acid polypeptide reads, in one-letter code: Cis-zeatin O-glucosyltransferase 1 (467 aa).

Residue H21 is the Proton acceptor of the active site. Residues H21 and N91 each coordinate an anthocyanidin. The active-site Charge relay is D127. Positions 343, 345, 360, 363, 364, 365, 368, 384, and 385 each coordinate UDP-alpha-D-glucose.

Belongs to the UDP-glycosyltransferase family. In terms of tissue distribution, highly expressed in root. Expressed at lower level in kernel and cob. Weakly expressed in leaves. Weakly or not expressed in stems.

The enzyme catalyses cis-zeatin + UDP-alpha-D-glucose = O-beta-D-glucosyl-cis-zeatin + UDP + H(+). In terms of biological role, utilizes UDP-glucose as the sugar donor and catalyzes the formation of O-beta-D-glucosyl-cis-zeatin from cis-zeatin. May regulate active versus storage forms of cytokinins and could have an impact on seed growth. The polypeptide is Cis-zeatin O-glucosyltransferase 1 (CISZOG1) (Zea mays (Maize)).